The primary structure comprises 83 residues: Ferredoxin (83 aa).

2 4Fe-4S ferredoxin-type domains span residues Ala-2–Glu-29 and Tyr-31–Ser-64. The [4Fe-4S] cluster site is built by Cys-9, Cys-12, Cys-15, Cys-19, Cys-38, Cys-41, Cys-50, and Cys-54.

Requires [4Fe-4S] cluster as cofactor.

Ferredoxins are iron-sulfur proteins that transfer electrons in a wide variety of metabolic reactions. This chain is Ferredoxin (fdx), found in Allochromatium vinosum (strain ATCC 17899 / DSM 180 / NBRC 103801 / NCIMB 10441 / D) (Chromatium vinosum).